The primary structure comprises 517 residues: Cytochrome P450 monooxygenase cdmJ (517 aa).

The helical transmembrane segment at 15 to 35 threads the bilayer; sequence YMWSLTLFALCLSAILMFPFL. N-linked (GlcNAc...) asparagine glycosylation is present at asparagine 404. Cysteine 451 contacts heme.

This sequence belongs to the cytochrome P450 family. Heme serves as cofactor.

The protein localises to the membrane. It catalyses the reaction 3-hydroxypentacecilide A + NADPH + O2 + H(+) = chrodrimanin F + NADP(+) + H2O. The catalysed reaction is chrodrimanin C + NADPH + O2 + H(+) = chrodrimanin H + NADP(+) + H2O. The enzyme catalyses verruculide A + NADPH + O2 + H(+) = chrodrimanin E + NADP(+) + H2O. It carries out the reaction chrodrimanin T + NADPH + O2 + H(+) = chrodrimanin A + NADP(+) + H2O. It participates in secondary metabolite biosynthesis; terpenoid biosynthesis. Cytochrome P450 monooxygenase; part of the gene cluster that mediates the biosynthesis of chrodrimanin B, a meroterpenoid that acts as a potent blocker of insect GABA-gated chloride channels. The first step of the pathway is the biosynthesis of 6-hydroxymellein by the polyketide synthase cdmE. The prenyltransferase cdmH acts as a 6-hydroxymellein 5-farnesyltransferase and produces the hydrophobic metabolite verruculide C. The FAD-dependent monooxygenase cdmI further converts verruculide C into verruculide B. The terpene cyclase cdmG then produced the pentacyclic molecule 3-hydroxypentacecilide A, the backbone structure of chrodrimanin B, via folding the farnesyl moiety of the substrate into the chair-boat conformation. The short-chain dehydrogenase/reductase cdmF functions as the 3-OH dehydrogenase that oxidizes the C-3 hydroxyl group of 3-hydroxypentacecilide A and produces chrodrimanin C, the dehydrogenated product of 3-hydroxypentacecilide A. The cytochrome P450 monooxygenase cdmJ then accepts both 3-hydroxypentacecilide A and chrodrimanin C and functions as a C-7-beta-hydroxylase to produce respectively chrodrimanin H and chrodrimanin F. The dioxygenase cdmA accepts chrodrimanin H to afford chrodrimanin E, which is further transformed to chrodrimanin A by the dioxygenase cdmD. CdmA can also accept chrodrimanin C as substrate to convert it into verruculide A, which is further converted into chrodrimanin T by cdmD. The last step of the biosynthesis is proposed to be performed by the acetyltransferase cdmC which acetylates chrodrimanin A to yield chrodrimanin B. The pathway may also lead to the production of additional shunt products, including chrodrimanins T and U. This is Cytochrome P450 monooxygenase cdmJ from Talaromyces verruculosus (Penicillium verruculosum).